The chain runs to 273 residues: Gap junction beta-5 protein (273 aa).

The Cytoplasmic segment spans residues 1 to 20; the sequence is MNWSIFEGLLSGVNKYSTAF. Residues 21-40 form a helical membrane-spanning segment; sequence GRIWLSLVFIFRVLVYLVTA. Residues 41 to 75 lie on the Extracellular side of the membrane; that stretch reads ERVWSDDHKDFDCNTRQPGCSNVCFDEFFPVSHVR. Residues 76–98 form a helical membrane-spanning segment; it reads LWALQLILVTCPSLLVVMHVAYR. Topologically, residues 99-126 are cytoplasmic; it reads EVQEKRHREAHGENSGRLYLNPGKKRGG. Residues 127–149 form a helical membrane-spanning segment; the sequence is LWWTYVCSLVFKASVDIAFLYVF. The Extracellular portion of the chain corresponds to 150 to 187; that stretch reads HSFYPKYILPPVVKCHADPCPNIVDCFISKPSEKNIFT. The chain crosses the membrane as a helical span at residues 188 to 210; it reads LFMVATAAICILLNLVELIYLVS. Residues 211 to 273 lie on the Cytoplasmic side of the membrane; the sequence is KRCHECLAAR…PRDHVKKTIL (63 aa).

Belongs to the connexin family. Beta-type (group I) subfamily. A connexon is composed of a hexamer of connexins.

It is found in the cell membrane. The protein localises to the cell junction. It localises to the gap junction. One gap junction consists of a cluster of closely packed pairs of transmembrane channels, the connexons, through which materials of low MW diffuse from one cell to a neighboring cell. The chain is Gap junction beta-5 protein (GJB5) from Homo sapiens (Human).